A 411-amino-acid chain; its full sequence is Nuclear receptor subfamily 2 group F member 1-A (411 aa).

A disordered region spans residues 1–68 (MAMVVSVWRD…AGDKGSQNSG (68 aa)). The segment covering 24-46 (NPAAQPAREQQQAASAAPHTPQT) has biased composition (low complexity). The segment at residues 73 to 148 (HIECVVCGDK…VGMRREAVQR (76 aa)) is a DNA-binding region (nuclear receptor). 2 NR C4-type zinc fingers span residues 76 to 96 (CVVC…CEGC) and 112 to 136 (CRAN…LKKC). The region spanning 174 to 400 (YLSGYISLLL…TLIRDMLLSG (227 aa)) is the NR LBD domain.

The protein belongs to the nuclear hormone receptor family. NR2 subfamily. In terms of tissue distribution, first expressed in 11-12 hour embryos. In the rostral brain of 13 hour embryos, expressed within the anterior half of the midbrain and the posterior part of the diencephalon. In the presumptive hindbrain, expressed in a segment-like stripe in the anterior region, resembling the presumptive rhombomere units of the hindbrain. Also detected in the intermediate mesoderm, posterior to the first somite. As somitogenesis proceeds, expression extends posteriorly and flanks the 10 most anterior somites. Expression changes extensively both in level and expansion of domains between 13 and 20 hours. In the rostral brain, expression extends to include a major part of the diencephalon and a caudal portion of the telencephalon. Within the hindbrain, strongly expressed in the two most anterior rhombomeres, and a lower but uniform expression is seen to extend throughout rhombomere 7. In 28 hour embryos, higher and more uniform expression is seen in both rostral and hindbrain areas. Also expressed in the retina of the eye.

Its subcellular location is the nucleus. Functionally, putative transcription factor that is required in photoreceptor cells precursors during eye development. In Danio rerio (Zebrafish), this protein is Nuclear receptor subfamily 2 group F member 1-A (nr2f1a).